Reading from the N-terminus, the 207-residue chain is Large ribosomal subunit protein bL9 (207 aa).

Over residues 162–176 (QKKEEKAKDEVSATE) the composition is skewed to basic and acidic residues. Residues 162-207 (QKKEEKAKDEVSATEKDEELMLSSVTNDNDGDGAKEIVVEGTEESQ) form a disordered region.

This sequence belongs to the bacterial ribosomal protein bL9 family.

Binds to the 23S rRNA. This is Large ribosomal subunit protein bL9 from Ehrlichia ruminantium (strain Gardel).